Here is a 23-residue protein sequence, read N- to C-terminus: Potassium channel toxin alpha-KTx 13.1 (23 aa).

Cystine bridges form between C2–C15, C5–C20, and C9–C22. Residues 13–20 (GKCINGRC) form an interaction with Ca(2+)-activated K(+) channels region.

As to expression, expressed by the venom gland.

The protein resides in the secreted. Functionally, blocks reversibly Shaker B potassium channels. Also displaces binding of noxiustoxin to mouse brain synaptosome membranes. In Tityus obscurus (Amazonian scorpion), this protein is Potassium channel toxin alpha-KTx 13.1.